The primary structure comprises 184 residues: uncharacterized protein (184 aa).

The first 20 residues, 1–20, serve as a signal peptide directing secretion; that stretch reads MKKQILALVCGVIFSSSTWA.

This sequence to E.coli YtfJ.

It is found in the periplasm. This is an uncharacterized protein from Haemophilus influenzae (strain ATCC 51907 / DSM 11121 / KW20 / Rd).